A 172-amino-acid chain; its full sequence is RNA pyrophosphohydrolase (172 aa).

Residues 6–149 (GYRLNVGIVI…KRDVYRRAMK (144 aa)) form the Nudix hydrolase domain. The Nudix box motif lies at 38–59 (GGIDDGETPEQAMFRELYEEVG).

This sequence belongs to the Nudix hydrolase family. RppH subfamily. A divalent metal cation is required as a cofactor.

In terms of biological role, accelerates the degradation of transcripts by removing pyrophosphate from the 5'-end of triphosphorylated RNA, leading to a more labile monophosphorylated state that can stimulate subsequent ribonuclease cleavage. The chain is RNA pyrophosphohydrolase from Vibrio vulnificus (strain CMCP6).